Consider the following 364-residue polypeptide: Peptide chain release factor 2 (364 aa).

Glutamine 252 is modified (N5-methylglutamine).

It belongs to the prokaryotic/mitochondrial release factor family. Methylated by PrmC. Methylation increases the termination efficiency of RF2.

The protein localises to the cytoplasm. In terms of biological role, peptide chain release factor 2 directs the termination of translation in response to the peptide chain termination codons UGA and UAA. This is Peptide chain release factor 2 from Clostridium perfringens (strain SM101 / Type A).